Consider the following 339-residue polypeptide: tRNA-specific 2-thiouridylase MnmA (339 aa).

Residues 8 to 15 (AMSGGVDS) and M34 contribute to the ATP site. The active-site Nucleophile is C94. A disulfide bridge links C94 with C188. An ATP-binding site is contributed by G118. Positions 136–138 (KDQ) are interaction with tRNA. Residue C188 is the Cysteine persulfide intermediate of the active site. The segment at 290–291 (RY) is interaction with tRNA.

It belongs to the MnmA/TRMU family.

Its subcellular location is the cytoplasm. The catalysed reaction is S-sulfanyl-L-cysteinyl-[protein] + uridine(34) in tRNA + AH2 + ATP = 2-thiouridine(34) in tRNA + L-cysteinyl-[protein] + A + AMP + diphosphate + H(+). In terms of biological role, catalyzes the 2-thiolation of uridine at the wobble position (U34) of tRNA, leading to the formation of s(2)U34. In Nitratiruptor sp. (strain SB155-2), this protein is tRNA-specific 2-thiouridylase MnmA.